The chain runs to 396 residues: S-adenosylmethionine synthase (396 aa).

ATP is bound at residue His-16. Asp-18 lines the Mg(2+) pocket. Residue Glu-44 coordinates K(+). L-methionine contacts are provided by Glu-57 and Gln-100. The flexible loop stretch occupies residues 100–110 (QSPDIAQGVDR). Residues 167–169 (DAK), 232–233 (RF), Asp-241, 247–248 (RK), Ala-264, and Lys-268 contribute to the ATP site. Asp-241 lines the L-methionine pocket. L-methionine is bound at residue Lys-272.

The protein belongs to the AdoMet synthase family. Homotetramer; dimer of dimers. It depends on Mg(2+) as a cofactor. The cofactor is K(+).

The protein resides in the cytoplasm. The catalysed reaction is L-methionine + ATP + H2O = S-adenosyl-L-methionine + phosphate + diphosphate. Its pathway is amino-acid biosynthesis; S-adenosyl-L-methionine biosynthesis; S-adenosyl-L-methionine from L-methionine: step 1/1. Functionally, catalyzes the formation of S-adenosylmethionine (AdoMet) from methionine and ATP. The overall synthetic reaction is composed of two sequential steps, AdoMet formation and the subsequent tripolyphosphate hydrolysis which occurs prior to release of AdoMet from the enzyme. This is S-adenosylmethionine synthase from Ralstonia nicotianae (strain ATCC BAA-1114 / GMI1000) (Ralstonia solanacearum).